The following is a 415-amino-acid chain: Dynein assembly factor with WD repeat domains 1 (415 aa).

8 WD repeats span residues 90–129 (AHIL…ELHT), 132–174 (GHRN…HTFR), 175–214 (GHTA…EVVT), 217–256 (GHLA…KVHT), 259–298 (GHCA…CVAT), 301–340 (GHDD…CITK), 343–384 (GHEG…QVLE), and 386–415 (HTDE…RIWR).

Belongs to the WD repeat WDR69 family. Interacts with IFT46.

The protein localises to the cytoplasm. The protein resides in the cytoskeleton. Its subcellular location is the flagellum basal body. It is found in the flagellum axoneme. In terms of biological role, required for axonemal dynein assembly and ciliary motility in ciliated organs, including Kupffer's vesicle, during embryogenesis. Facilitates the onset of robust cilia motility during development. The chain is Dynein assembly factor with WD repeat domains 1 (Daw1) from Rattus norvegicus (Rat).